A 597-amino-acid chain; its full sequence is Inactive metallocarboxypeptidase ECM14 (597 aa).

The first 21 residues, 1 to 21 (MRLFTHGQVLALLAFVNTISA), serve as a signal peptide directing secretion. A propeptide spanning residues 22 to 174 (TPSFSTNSYP…QTIYESYPSP (153 aa)) is cleaved from the precursor. The span at 170-179 (SYPSPSQSPS) shows a compositional bias: low complexity. A disordered region spans residues 170-189 (SYPSPSQSPSGRERGFLPSG). One can recognise a Peptidase M14 domain in the interval 202–522 (NYQPLSVIVP…NAVMMLGRFL (321 aa)). Histidine 264 and glutamate 267 together coordinate Zn(2+). Substrate contacts are provided by residues 264-267 (HARE), arginine 322, and 339-340 (DR). Cysteines 333 and 356 form a disulfide. N-linked (GlcNAc...) asparagine glycosylation occurs at asparagine 349. Residue histidine 396 participates in Zn(2+) binding. 397–398 (SY) is a binding site for substrate. The disordered stretch occupies residues 543 to 597 (KDDKPILNDDDDDDADTNDDGIGRKDDSWIPDEYKGDNDRDESDGGWAFRRLRKR). The span at 550-561 (NDDDDDDADTND) shows a compositional bias: acidic residues. The span at 563-580 (GIGRKDDSWIPDEYKGDN) shows a compositional bias: basic and acidic residues.

It belongs to the peptidase M14 family. Zn(2+) serves as cofactor.

Its subcellular location is the vacuole. The protein resides in the secreted. Functionally, inactive carboxypeptidase that may play a role in cell wall organization and biogenesis. In Ajellomyces capsulatus (strain G186AR / H82 / ATCC MYA-2454 / RMSCC 2432) (Darling's disease fungus), this protein is Inactive metallocarboxypeptidase ECM14 (ECM14).